The chain runs to 402 residues: Acetate kinase (402 aa).

Mg(2+) is bound at residue N10. K17 is a binding site for ATP. R89 is a substrate binding site. The Proton donor/acceptor role is filled by D148. ATP-binding positions include H208–G212, D283–R285, and G334–N338. Residue E389 participates in Mg(2+) binding.

It belongs to the acetokinase family. Homodimer. Mg(2+) serves as cofactor. Mn(2+) is required as a cofactor.

It localises to the cytoplasm. The catalysed reaction is acetate + ATP = acetyl phosphate + ADP. It participates in metabolic intermediate biosynthesis; acetyl-CoA biosynthesis; acetyl-CoA from acetate: step 1/2. Functionally, catalyzes the formation of acetyl phosphate from acetate and ATP. Can also catalyze the reverse reaction. The polypeptide is Acetate kinase (Actinobacillus pleuropneumoniae serotype 5b (strain L20)).